A 128-amino-acid chain; its full sequence is Ribosome-binding factor A (128 aa).

Belongs to the RbfA family. Monomer. Binds 30S ribosomal subunits, but not 50S ribosomal subunits or 70S ribosomes.

The protein resides in the cytoplasm. One of several proteins that assist in the late maturation steps of the functional core of the 30S ribosomal subunit. Associates with free 30S ribosomal subunits (but not with 30S subunits that are part of 70S ribosomes or polysomes). Required for efficient processing of 16S rRNA. May interact with the 5'-terminal helix region of 16S rRNA. This chain is Ribosome-binding factor A, found in Saccharophagus degradans (strain 2-40 / ATCC 43961 / DSM 17024).